The primary structure comprises 367 residues: tRNA-dihydrouridine(20a/20b) synthase [NAD(P)+] (367 aa).

FMN-binding positions include 45 to 47 (PMV) and Q99. C128 (proton donor) is an active-site residue. Residues K169, H197, 231–233 (NGD), and 255–256 (VR) each bind FMN.

It belongs to the Dus family. Dus4 subfamily. FMN is required as a cofactor.

The enzyme catalyses 5,6-dihydrouridine(20a) in tRNA + NADP(+) = uridine(20a) in tRNA + NADPH + H(+). The catalysed reaction is 5,6-dihydrouridine(20a) in tRNA + NAD(+) = uridine(20a) in tRNA + NADH + H(+). It catalyses the reaction 5,6-dihydrouridine(20b) in tRNA + NAD(+) = uridine(20b) in tRNA + NADH + H(+). It carries out the reaction 5,6-dihydrouridine(20b) in tRNA + NADP(+) = uridine(20b) in tRNA + NADPH + H(+). The enzyme catalyses a 5,6-dihydrouridine in mRNA + NAD(+) = a uridine in mRNA + NADH + H(+). The catalysed reaction is a 5,6-dihydrouridine in mRNA + NADP(+) = a uridine in mRNA + NADPH + H(+). Catalyzes the synthesis of dihydrouridine, a modified base found in the D-loop of most tRNAs. Specifically modifies U20a and U20b in cytoplasmic tRNAs. Also able to mediate dihydrouridylation of some mRNAs, thereby affecting their translation. The protein is tRNA-dihydrouridine(20a/20b) synthase [NAD(P)+] of Saccharomyces cerevisiae (strain ATCC 204508 / S288c) (Baker's yeast).